The primary structure comprises 189 residues: Heme-binding protein 1 (189 aa).

This sequence belongs to the HEBP family. As to quaternary structure, monomer.

The protein resides in the cytoplasm. Functionally, may bind free porphyrinogens that may be present in the cell and thus facilitate removal of these potentially toxic compound. Binds with a high affinity to one molecule of heme or porphyrins. It binds metalloporphyrins, free porphyrins and N-methylprotoporphyrin with similar affinities. This is Heme-binding protein 1 (HEBP1) from Sus scrofa (Pig).